The primary structure comprises 344 residues: MSDNESEGPTNQTTEPVDNAWSLKIPAFKPEDNPHGLVEESSFATLFPKYREKYLKEVWPLVEQCLAEHHLKAELDLIEGSMVVKTTRKTWDPYIIIKSRDMIKLMARSVPFEQAKRVLQDDTGCDIIKIGNLVHKKEKFVKRRQRLIGPNGATLKSIELLTDCYVLVQGNTVSALGPYKGLQQVRDIVLDTMNNVHPIYNIKALMIKRELMKDPKLAGEDWSRFLPKFKNKNISKRKQPKNKKPKKEYTPFPPQQPESKIDKQLATGEYFLNKEQKQAKRQQERTAKQAEAAKKQDERRNKDFVPPTEDTPGPSRKRAAEDNKVDVQALKAKLMKANKKKERS.

The region spanning 126–194 (DIIKIGNLVH…VRDIVLDTMN (69 aa)) is the KH domain. Basic residues predominate over residues 230–246 (KNKNISKRKQPKNKKPK). A disordered region spans residues 230-326 (KNKNISKRKQ…KRAAEDNKVD (97 aa)). Positions 271–344 (FLNKEQKQAK…MKANKKKERS (74 aa)) form a coiled coil. The span at 272 to 303 (LNKEQKQAKRQQERTAKQAEAAKKQDERRNKD) shows a compositional bias: basic and acidic residues.

It belongs to the KRR1 family. Monomer. Component of the ribosomal small subunit (SSU) processome.

It is found in the nucleus. The protein resides in the nucleolus. Functionally, required for 40S ribosome biogenesis. Involved in nucleolar processing of pre-18S ribosomal RNA and ribosome assembly. Binds to RNA. Required for female germline development, cell viability during eye development and for survival of dividing cells and epithelial cells during early wing disk development. This is KRR1 small subunit processome component homolog from Drosophila mojavensis (Fruit fly).